A 138-amino-acid polypeptide reads, in one-letter code: MRTLWIMAVLLVGVKGHLMQFENMIKKVTGRSGIWWYGSYGCYCGKGGEGRPQDPSDRCCFVHDCCYGKVTGCDPKDDFYIYSSENGDIVCGDDDLCKKEVCECDKAAAICFRDNMDTYQNKYWFYPASNCKEESEPC.

The signal sequence occupies residues 1-16 (MRTLWIMAVLLVGVKG). 7 disulfide bridges follow: cysteine 42-cysteine 131, cysteine 44-cysteine 60, cysteine 59-cysteine 111, cysteine 65-cysteine 138, cysteine 66-cysteine 104, cysteine 73-cysteine 97, and cysteine 91-cysteine 102. Tyrosine 43, glycine 45, and glycine 47 together coordinate Ca(2+). Histidine 63 is an active-site residue. A Ca(2+)-binding site is contributed by aspartate 64. The active site involves aspartate 105.

Belongs to the phospholipase A2 family. Group II subfamily. D49 sub-subfamily. It depends on Ca(2+) as a cofactor. Expressed by the venom gland.

The protein localises to the secreted. The catalysed reaction is a 1,2-diacyl-sn-glycero-3-phosphocholine + H2O = a 1-acyl-sn-glycero-3-phosphocholine + a fatty acid + H(+). In terms of biological role, PLA2 catalyzes the calcium-dependent hydrolysis of the 2-acyl groups in 3-sn-phosphoglycerides. This is Acidic phospholipase A2 pgPLA 1b/pgPLA 2b from Protobothrops flavoviridis (Habu).